A 231-amino-acid chain; its full sequence is GFP-like fluorescent chromoprotein FP506 (231 aa).

The 5-imidazolinone (Asn-Gly) cross-link spans 66 to 68; that stretch reads NYG. Tyr67 is modified (2,3-didehydrotyrosine).

Belongs to the GFP family. Contains a chromophore consisting of modified amino acid residues. The chromophore is formed by autocatalytic backbone condensation between Xaa-N and Gly-(N+2), and oxidation of Tyr-(N+1) to didehydrotyrosine. Maturation of the chromophore requires nothing other than molecular oxygen. The precise stereochemistry of the tyrosine has not been determined. Tentacle and oral disk.

Functionally, pigment protein that is yellow-green in color. In Zoanthus sp. (Green polyp), this protein is GFP-like fluorescent chromoprotein FP506.